Consider the following 191-residue polypeptide: Protein GrpE (191 aa).

The span at 1 to 19 (MKDEHNQKHDHLSQKEPES) shows a compositional bias: basic and acidic residues. Residues 1 to 44 (MKDEHNQKHDHLSQKEPESYQKACACKEQQDEEMQEAGEKEGEI) form a disordered region.

Belongs to the GrpE family. As to quaternary structure, homodimer.

Its subcellular location is the cytoplasm. Functionally, participates actively in the response to hyperosmotic and heat shock by preventing the aggregation of stress-denatured proteins, in association with DnaK and GrpE. It is the nucleotide exchange factor for DnaK and may function as a thermosensor. Unfolded proteins bind initially to DnaJ; upon interaction with the DnaJ-bound protein, DnaK hydrolyzes its bound ATP, resulting in the formation of a stable complex. GrpE releases ADP from DnaK; ATP binding to DnaK triggers the release of the substrate protein, thus completing the reaction cycle. Several rounds of ATP-dependent interactions between DnaJ, DnaK and GrpE are required for fully efficient folding. The polypeptide is Protein GrpE (Helicobacter pylori (strain G27)).